Here is a 345-residue protein sequence, read N- to C-terminus: Uroporphyrinogen decarboxylase (345 aa).

Substrate is bound by residues 27–31, Phe46, Asp76, Tyr152, Ser207, and His321; that span reads RQAGR.

This sequence belongs to the uroporphyrinogen decarboxylase family. Homodimer.

The protein resides in the cytoplasm. The catalysed reaction is uroporphyrinogen III + 4 H(+) = coproporphyrinogen III + 4 CO2. The protein operates within porphyrin-containing compound metabolism; protoporphyrin-IX biosynthesis; coproporphyrinogen-III from 5-aminolevulinate: step 4/4. Its function is as follows. Catalyzes the decarboxylation of four acetate groups of uroporphyrinogen-III to yield coproporphyrinogen-III. The chain is Uroporphyrinogen decarboxylase from Staphylococcus aureus (strain bovine RF122 / ET3-1).